We begin with the raw amino-acid sequence, 912 residues long: E3 ubiquitin-protein ligase HACE1 (912 aa).

ANK repeat units lie at residues 23-55 (LPED…NSKF), 64-93 (VKRS…DPNY), 97-126 (SGCT…DVNI), 130-159 (EGLT…NVDV), 163-192 (MGQT…DINR), 196-226 (SGAT…YLPD), and 228-253 (NGVT…QHHP). Positions 577–912 (NCEKLKQGIA…HCGSYGYTMA (336 aa)) constitute an HECT domain. Cys879 functions as the Glycyl thioester intermediate in the catalytic mechanism.

The protein resides in the golgi apparatus. It localises to the golgi stack membrane. It is found in the cytoplasm. Its subcellular location is the endoplasmic reticulum. It catalyses the reaction S-ubiquitinyl-[E2 ubiquitin-conjugating enzyme]-L-cysteine + [acceptor protein]-L-lysine = [E2 ubiquitin-conjugating enzyme]-L-cysteine + N(6)-ubiquitinyl-[acceptor protein]-L-lysine.. Its pathway is protein modification; protein ubiquitination. Its function is as follows. E3 ubiquitin-protein ligase involved in Golgi membrane fusion and regulation of small GTPases. Acts as a regulator of Golgi membrane dynamics during the cell cycle: recruited to Golgi membrane by Rab proteins and regulates postmitotic Golgi membrane fusion. Acts by mediating ubiquitination during mitotic Golgi disassembly, ubiquitination serving as a signal for Golgi reassembly later, after cell division. The protein is E3 ubiquitin-protein ligase HACE1 (hace1) of Xenopus tropicalis (Western clawed frog).